Reading from the N-terminus, the 554-residue chain is uncharacterized protein (554 aa).

This is an uncharacterized protein from Acidianus sp. F28 (AFV-2).